Reading from the N-terminus, the 367-residue chain is MNGSQTLVVKLGTSVLTGGSLRLNRAHIVELVRQCAQQHAAGHRIVIVTSGAIAAGREHLGYPELPATIASKQLLAAVGQSRLIQLWEQLFSIYGIHVGQMLLTRADLEDRERFLNARDTMTALLDNRIVPVINENDAVATAEIKVGDNDNLSALAAILAGADKLLLLTDQQGLYTADPRNNPQAELIREVHGIDDALRAIAGDSVSGLGTGGMGTKLQAADVACRAGIDVIIAAGSKPGVVADVIEGKPVGTRFHALETPLENRKRWIFGAPPAGEITVDDGAVDAIMARGSSLLPKGIREVKGDFSRGEVIRIRNLTGRDLAHGVSRYNSDAMRMIAGHHSQEISEILGYEYGPVAVHRDDMIVS.

Lysine 10 is a binding site for ATP. Residues serine 50, aspartate 137, and asparagine 149 each coordinate substrate. ATP contacts are provided by residues 169–170 and 211–217; these read TD and TGGMGTK. Residues 275–353 form the PUA domain; sequence AGEITVDDGA…QEISEILGYE (79 aa).

The protein belongs to the glutamate 5-kinase family.

It is found in the cytoplasm. The catalysed reaction is L-glutamate + ATP = L-glutamyl 5-phosphate + ADP. The protein operates within amino-acid biosynthesis; L-proline biosynthesis; L-glutamate 5-semialdehyde from L-glutamate: step 1/2. Functionally, catalyzes the transfer of a phosphate group to glutamate to form L-glutamate 5-phosphate. The sequence is that of Glutamate 5-kinase from Serratia proteamaculans (strain 568).